The chain runs to 400 residues: Elongation factor Tu (400 aa).

Positions 10-208 (KPHVNVGTIG…AMDNYIPEPQ (199 aa)) constitute a tr-type G domain. A G1 region spans residues 19-26 (GHIDHGKS). 19–26 (GHIDHGKS) contributes to the GTP binding site. Residue S26 participates in Mg(2+) binding. A G2 region spans residues 60–64 (GITIN). Positions 81 to 84 (DCPG) are G3. GTP is bound by residues 81–85 (DCPGH) and 136–139 (NKTD). The tract at residues 136–139 (NKTD) is G4. The G5 stretch occupies residues 174–176 (SAL).

Belongs to the TRAFAC class translation factor GTPase superfamily. Classic translation factor GTPase family. EF-Tu/EF-1A subfamily. Monomer.

Its subcellular location is the cytoplasm. It catalyses the reaction GTP + H2O = GDP + phosphate + H(+). Functionally, GTP hydrolase that promotes the GTP-dependent binding of aminoacyl-tRNA to the A-site of ribosomes during protein biosynthesis. This is Elongation factor Tu from Thermotoga petrophila (strain ATCC BAA-488 / DSM 13995 / JCM 10881 / RKU-1).